A 350-amino-acid polypeptide reads, in one-letter code: tRNA uridine(34) hydroxylase (350 aa).

The Rhodanese domain maps to 146–240 (DDPDAVFIDM…YARRAREQGL (95 aa)). The active-site Cysteine persulfide intermediate is the Cys200. The segment covering 319–328 (RRRRAGRENG) has biased composition (basic and acidic residues). Residues 319–350 (RRRRAGRENGNKIFNKSRGRLNSKLSIPDPAE) form a disordered region.

Belongs to the TrhO family.

It catalyses the reaction uridine(34) in tRNA + AH2 + O2 = 5-hydroxyuridine(34) in tRNA + A + H2O. Catalyzes oxygen-dependent 5-hydroxyuridine (ho5U) modification at position 34 in tRNAs. The protein is tRNA uridine(34) hydroxylase of Salmonella choleraesuis (strain SC-B67).